Consider the following 544-residue polypeptide: Chaperonin GroEL 1 (544 aa).

Residues Thr29–Pro32, Asp86–Thr90, Gly413, Asn479–Ala481, and Asp495 each bind ATP.

The protein belongs to the chaperonin (HSP60) family. As to quaternary structure, forms a cylinder of 14 subunits composed of two heptameric rings stacked back-to-back. Interacts with the co-chaperonin GroES.

It localises to the cytoplasm. The catalysed reaction is ATP + H2O + a folded polypeptide = ADP + phosphate + an unfolded polypeptide.. Functionally, together with its co-chaperonin GroES, plays an essential role in assisting protein folding. The GroEL-GroES system forms a nano-cage that allows encapsulation of the non-native substrate proteins and provides a physical environment optimized to promote and accelerate protein folding. This is Chaperonin GroEL 1 from Parasynechococcus marenigrum (strain WH8102).